Reading from the N-terminus, the 95-residue chain is DNA-directed RNA polymerase subunit Rpo6 (95 aa).

It belongs to the archaeal Rpo6/eukaryotic RPB6 RNA polymerase subunit family. In terms of assembly, part of the RNA polymerase complex.

It is found in the cytoplasm. The enzyme catalyses RNA(n) + a ribonucleoside 5'-triphosphate = RNA(n+1) + diphosphate. In terms of biological role, DNA-dependent RNA polymerase (RNAP) catalyzes the transcription of DNA into RNA using the four ribonucleoside triphosphates as substrates. The chain is DNA-directed RNA polymerase subunit Rpo6 from Saccharolobus islandicus (strain M.16.27) (Sulfolobus islandicus).